Reading from the N-terminus, the 393-residue chain is Protein TsgA (393 aa).

Transmembrane regions (helical) follow at residues 11–31 (WISFLSYALTGALVIVTGMVM), 51–71 (FLNAGILISIFLNAWLMEIIP), 78–98 (FGFILMVLAVAGLMFSHSLAL), 101–121 (AAMFVLGLVSGITMSIGTFLI), 134–154 (LLFTDSFFSMAGMIFPMVAAF), 162–182 (WYWVYACIGLVYLAIFILTFG), 206–226 (IGVLFLAVAALCYILGQLGFI), 245–265 (ALVSDFWMSYMFGMWAFSFIL), 273–293 (ILTVLAGIAAVLMYLFITGTQ), 298–318 (WFILTLGFFSSAIYTSIITLG), 332–352 (FILTCGTIGTMLTFVVTGPIV), and 361–381 (LLTANGLYAVVFVMCFALGFV).

Belongs to the major facilitator superfamily. TsgA family.

Its subcellular location is the cell inner membrane. The chain is Protein TsgA from Salmonella schwarzengrund (strain CVM19633).